A 647-amino-acid polypeptide reads, in one-letter code: Exoribonuclease 2 (647 aa).

Residues 192–520 (REDLTALSFV…NHRLLKAIIS (329 aa)) form the RNB domain. Residues 565 to 647 (ESTFNAEIID…ETRNIVARPI (83 aa)) enclose the S1 motif domain.

The protein belongs to the RNR ribonuclease family. RNase II subfamily.

The protein resides in the cytoplasm. It catalyses the reaction Exonucleolytic cleavage in the 3'- to 5'-direction to yield nucleoside 5'-phosphates.. In terms of biological role, involved in mRNA degradation. Hydrolyzes single-stranded polyribonucleotides processively in the 3' to 5' direction. In Proteus mirabilis (strain HI4320), this protein is Exoribonuclease 2.